Here is a 103-residue protein sequence, read N- to C-terminus: Omega toxin Ap5 (103 aa).

A signal peptide spans 1–22 (MNTIQVILFAVVLVLTVTVGQA). The propeptide occupies 23–57 (DEDSAETSLLRKLEEAEASMFGQYLEESKNSREKR). 3 cysteine pairs are disulfide-bonded: Cys-58–Cys-73, Cys-65–Cys-78, and Cys-72–Cys-93.

It belongs to the neurotoxin 14 (magi-1) family. 08 (Ltx-4) subfamily. As to expression, expressed by the venom duct.

Its subcellular location is the secreted. Its function is as follows. Shows a weak inhibition on the voltage-gated calcium channel Cav2.1/CACNA1A and some voltage-gated sodium channels (with 1 uM toxin tested: 22.08% inhibition on Cav2.1/CACNA1A, 6.6% on Nav1.1/SCN1A, 4.2% on Nav1.5, and 16% on Nav1.7). Functionally, shows a weak inhibition on the voltage-gated calcium channel Cav2.1/CACNA1A (28.06% at 1 uM). This is Omega toxin Ap5 from Acanthoscurria paulensis (Brazilian giant black tarantula spider).